Consider the following 725-residue polypeptide: uncharacterized protein (725 aa).

A FtsK domain is found at 363–556 (GTYVEIPLYS…FVTTRPEDSC (194 aa)). 382–389 (GRTRGGKS) lines the ATP pocket.

The protein belongs to the FtsK/SpoIIIE/SftA family.

Functionally, probable DNA motor protein. May track DNA in a ATP-dependent manner by generating positive supercoils in front of it and negative supercoils behind it. This is an uncharacterized protein from Nostoc sp. (strain PCC 7120 / SAG 25.82 / UTEX 2576).